The sequence spans 274 residues: Diaminopimelate epimerase (274 aa).

Asparagine 11, glutamine 44, and asparagine 64 together coordinate substrate. Residue cysteine 73 is the Proton donor of the active site. Substrate is bound by residues glycine 74–asparagine 75, asparagine 157, asparagine 190, and glutamate 208–arginine 209. Catalysis depends on cysteine 217, which acts as the Proton acceptor. Glycine 218–serine 219 lines the substrate pocket.

Belongs to the diaminopimelate epimerase family. As to quaternary structure, homodimer.

Its subcellular location is the cytoplasm. The catalysed reaction is (2S,6S)-2,6-diaminopimelate = meso-2,6-diaminopimelate. The protein operates within amino-acid biosynthesis; L-lysine biosynthesis via DAP pathway; DL-2,6-diaminopimelate from LL-2,6-diaminopimelate: step 1/1. In terms of biological role, catalyzes the stereoinversion of LL-2,6-diaminopimelate (L,L-DAP) to meso-diaminopimelate (meso-DAP), a precursor of L-lysine and an essential component of the bacterial peptidoglycan. This is Diaminopimelate epimerase from Salmonella agona (strain SL483).